The sequence spans 497 residues: Galactose/methyl galactoside import ATP-binding protein MglA (497 aa).

2 consecutive ABC transporter domains span residues 6 to 241 (LEIK…VGRS) and 252 to 497 (VPGE…AKYL). 38–45 (GENGAGKS) contributes to the ATP binding site.

The protein belongs to the ABC transporter superfamily. Galactose/methyl galactoside importer (TC 3.A.1.2.3) family. The complex is composed of one ATP-binding protein (MglA), two transmembrane proteins (MglC) and a solute-binding protein (MglB).

Its subcellular location is the cell inner membrane. The catalysed reaction is D-galactose(out) + ATP + H2O = D-galactose(in) + ADP + phosphate + H(+). The enzyme catalyses methyl beta-D-galactoside(out) + ATP + H2O = methyl beta-D-galactoside(in) + ADP + phosphate + H(+). In terms of biological role, part of the ABC transporter complex MglABC involved in galactose/methyl galactoside import. Responsible for energy coupling to the transport system. This is Galactose/methyl galactoside import ATP-binding protein MglA from Treponema denticola (strain ATCC 35405 / DSM 14222 / CIP 103919 / JCM 8153 / KCTC 15104).